The sequence spans 323 residues: Olfactory receptor 52B2 (323 aa).

The Extracellular segment spans residues 1-27; the sequence is MSHTNVTIFHPAVFVLPGIPGLEAYHI. The N-linked (GlcNAc...) asparagine glycan is linked to asparagine 5. A helical transmembrane segment spans residues 28–48; it reads WLSIPLCLIYITAVLGNSILI. Residues 49–56 are Cytoplasmic-facing; that stretch reads VVIVMERN. A helical transmembrane segment spans residues 57-77; the sequence is LHVPMYFFLSMLAVMDILLST. Over 78–101 the chain is Extracellular; the sequence is TTVPKALAIFWLQAHNIAFDACVT. Cysteine 99 and cysteine 191 are oxidised to a cystine. Residues 102 to 122 traverse the membrane as a helical segment; the sequence is QGFFVHMMFVGESAILLAMAF. At 123–141 the chain is on the cytoplasmic side; it reads DRFVAICAPLRYTTVLTWP. Residues 142-162 traverse the membrane as a helical segment; that stretch reads VVGRIALAVITRSFCIIFPVI. The Extracellular segment spans residues 163-198; that stretch reads FLLKRLPFCLTNIVPHSYCEHIGVARLACADITVNI. The chain crosses the membrane as a helical span at residues 199–219; that stretch reads WYGFSVPIVMVILDVILIAVS. The Cytoplasmic portion of the chain corresponds to 220 to 239; it reads YSLILRAVFRLPSQDARHKA. Residues 240–260 traverse the membrane as a helical segment; that stretch reads LSTCGSHLCVILMFYVPSFFT. The Extracellular segment spans residues 261–275; the sequence is LLTHHFGRNIPQHVH. Residues 276 to 296 traverse the membrane as a helical segment; it reads ILLANLYVAVPPMLNPIVYGV. Over 297-323 the chain is Cytoplasmic; that stretch reads KTKQIREGVAHRFFDIKTWCCTSPLGS.

This sequence belongs to the G-protein coupled receptor 1 family.

It is found in the cell membrane. Its function is as follows. Odorant receptor. This chain is Olfactory receptor 52B2 (OR52B2), found in Homo sapiens (Human).